The sequence spans 146 residues: Prolactin-inducible protein homolog (146 aa).

The first 28 residues, 1–28 (MHLLQLLFRASPATLLLVLCLQLGANKA), serve as a signal peptide directing secretion. Gln-29 is modified (pyrrolidone carboxylic acid). 2 disulfide bridges follow: Cys-65–Cys-91 and Cys-89–Cys-123. N-linked (GlcNAc...) asparagine glycosylation occurs at Asn-105.

Belongs to the PIP family. In terms of assembly, monomer. Interacts with AZGP1.

The protein localises to the secreted. The protein is Prolactin-inducible protein homolog (PIP) of Pongo pygmaeus (Bornean orangutan).